A 201-amino-acid chain; its full sequence is Small ribosomal subunit protein uS4 (201 aa).

The interval 26–48 (LSKKNYPPGQHGNSRKRKTSEYG) is disordered. The region spanning 92–155 (GRLDNVVFRL…KSLEVIANSL (64 aa)) is the S4 RNA-binding domain.

This sequence belongs to the universal ribosomal protein uS4 family. As to quaternary structure, part of the 30S ribosomal subunit. Contacts protein S5. The interaction surface between S4 and S5 is involved in control of translational fidelity.

In terms of biological role, one of the primary rRNA binding proteins, it binds directly to 16S rRNA where it nucleates assembly of the body of the 30S subunit. With S5 and S12 plays an important role in translational accuracy. This Bacteroides thetaiotaomicron (strain ATCC 29148 / DSM 2079 / JCM 5827 / CCUG 10774 / NCTC 10582 / VPI-5482 / E50) protein is Small ribosomal subunit protein uS4.